The sequence spans 88 residues: ATP synthase epsilon chain (88 aa).

The protein belongs to the ATPase epsilon chain family. As to quaternary structure, F-type ATPases have 2 components, CF(1) - the catalytic core - and CF(0) - the membrane proton channel. CF(1) has five subunits: alpha(3), beta(3), gamma(1), delta(1), epsilon(1). CF(0) has three main subunits: a, b and c.

Its subcellular location is the cell inner membrane. Its function is as follows. Produces ATP from ADP in the presence of a proton gradient across the membrane. This is ATP synthase epsilon chain (atpC) from Chlorobaculum tepidum (strain ATCC 49652 / DSM 12025 / NBRC 103806 / TLS) (Chlorobium tepidum).